Here is a 354-residue protein sequence, read N- to C-terminus: Methionine import ATP-binding protein MetN (354 aa).

In terms of domain architecture, ABC transporter spans 8-250 (LDHIDITFRQ…PKEALTQEFI (243 aa)). Position 42 to 49 (42 to 49 (GYSGAGKS)) interacts with ATP.

The protein belongs to the ABC transporter superfamily. Methionine importer (TC 3.A.1.24) family. As to quaternary structure, the complex is composed of two ATP-binding proteins (MetN), two transmembrane proteins (MetI) and a solute-binding protein (MetQ).

Its subcellular location is the cell membrane. It carries out the reaction L-methionine(out) + ATP + H2O = L-methionine(in) + ADP + phosphate + H(+). It catalyses the reaction D-methionine(out) + ATP + H2O = D-methionine(in) + ADP + phosphate + H(+). Its function is as follows. Part of the ABC transporter complex MetNIQ involved in methionine import. Responsible for energy coupling to the transport system. In Streptococcus pyogenes serotype M3 (strain ATCC BAA-595 / MGAS315), this protein is Methionine import ATP-binding protein MetN.